The sequence spans 314 residues: Melanoma-associated antigen 12 (314 aa).

Over residues M1–E14 the composition is skewed to basic and acidic residues. The segment at M1 to P72 is disordered. Low complexity predominate over residues E17–T44. The MAGE domain maps to L109–A308.

In terms of tissue distribution, expressed in many tumors of several types, such as melanoma, head and neck squamous cell carcinoma, lung carcinoma and breast carcinoma, but not in normal tissues except for testes.

Its function is as follows. Not known, though may play a role tumor transformation or progression. In vitro promotes cell viability in melanoma cell lines. The chain is Melanoma-associated antigen 12 (MAGEA12) from Homo sapiens (Human).